Consider the following 231-residue polypeptide: Ribose-5-phosphate isomerase A (231 aa).

Substrate contacts are provided by residues 23-26 (SGST), 80-83 (DGAD), and 93-96 (KGGG). The Proton acceptor role is filled by Glu102. Lys120 provides a ligand contact to substrate.

The protein belongs to the ribose 5-phosphate isomerase family. Homodimer.

It catalyses the reaction aldehydo-D-ribose 5-phosphate = D-ribulose 5-phosphate. It participates in carbohydrate degradation; pentose phosphate pathway; D-ribose 5-phosphate from D-ribulose 5-phosphate (non-oxidative stage): step 1/1. Catalyzes the reversible conversion of ribose-5-phosphate to ribulose 5-phosphate. This chain is Ribose-5-phosphate isomerase A, found in Prochlorococcus marinus subsp. pastoris (strain CCMP1986 / NIES-2087 / MED4).